A 457-amino-acid chain; its full sequence is Multidrug resistance protein MdtK (457 aa).

The next 12 membrane-spanning stretches (helical) occupy residues 11–31, 53–73, 93–113, 127–147, 160–180, 188–208, 243–263, 276–296, 314–334, 357–377, 387–407, and 418–438; these read LLALAIPVILAQVAQTAMGFV, IWLPAILFGHGLLLALTPVIA, WLASFVSVLVMIVLWNAGYII, AVGYLRALLWGAPGYLFFQVA, GMVMGFLGLLVNIPVNYIFIY, LGGIGCGVATAAVYWVMFIAM, LPIALALFFEVTLFAVVALLV, IALNFSSLMFVLPMSLAAAVT, AARTGLSVGVCMAVVTAIFTV, LMLLAAVYQISDSIQVIGSGI, IFFITFTAYWVLGLPSGYILA, and PAGFWMGFIIGLTSAAVLMML.

It belongs to the multi antimicrobial extrusion (MATE) (TC 2.A.66.1) family. MdtK subfamily.

It is found in the cell inner membrane. Multidrug efflux pump that functions probably as a Na(+)/drug antiporter. The polypeptide is Multidrug resistance protein MdtK (Salmonella arizonae (strain ATCC BAA-731 / CDC346-86 / RSK2980)).